The sequence spans 257 residues: MASKIGSRRWMLQLIMQLGSVLLTRCPFWGCFSQLMLYAERAEARRKPDIPVPYLYFDMGAAVLCASFMSFGVKRRWFALGAALQLAISTYAAYIGGYVHYGDWLKVRMYSRTVAIIGGFLVLASGAGELYRRKPRSRSLQSTGQVFLGIYLICVAYSLQHSKEDRLAYLNHLPGGELMIQLFFVLYGILALAFLSGYYVTLAAQILAVLLPPVMLLIDGNVAYWHNTRRVEFWNQMKLLGESVGIFGTAVILATDG.

A run of 8 helical transmembrane segments spans residues valine 21–glutamate 40, valine 52–glycine 72, tryptophan 77–glycine 97, tyrosine 110–leucine 130, serine 139–leucine 159, leucine 182–leucine 202, isoleucine 206–histidine 226, and phenylalanine 233–leucine 253.

The protein localises to the membrane. May activate NF-kappa-B signaling pathways. This is Transmembrane protein 101 (TMEM101) from Homo sapiens (Human).